Consider the following 55-residue polypeptide: Large ribosomal subunit protein bL32 (55 aa).

Basic residues predominate over residues 1–19; the sequence is MAVPKRRMSRANTHTRRSQ. Residues 1-21 form a disordered region; the sequence is MAVPKRRMSRANTHTRRSQWK.

Belongs to the bacterial ribosomal protein bL32 family.

This Corynebacterium kroppenstedtii (strain DSM 44385 / JCM 11950 / CIP 105744 / CCUG 35717) protein is Large ribosomal subunit protein bL32.